The following is a 285-amino-acid chain: Baculoviral IAP repeat-containing protein 7 (285 aa).

The disordered stretch occupies residues 18 to 47; it reads ESRARDSVRGPELSHREDGSGRTQEQDKPH. Residues 19 to 47 are compositionally biased toward basic and acidic residues; sequence SRARDSVRGPELSHREDGSGRTQEQDKPH. The BIR repeat unit spans residues 96–161; the sequence is RLASFYDWPS…RWFPRCQFLL (66 aa). Residues Cys-130, Cys-133, His-150, and Cys-157 each contribute to the Zn(2+) site. A disordered region spans residues 184 to 225; the sequence is QREEPEDAVSATPSAPAHGSPELLRSRRETQPEDVSEPGAKD. Residues 239-273 form an RING-type zinc finger; it reads CKVCLDRAVSIVFVPCGHFVCTECAPNLQLCPICR.

Belongs to the IAP family. In terms of assembly, binds to caspase-9. Interaction with DIABLO/SMAC via the BIR domain disrupts binding to caspase-9 and apoptotic suppressor activity. Interacts with TAB1. In vitro, interacts with caspase-3 and caspase-7 via its BIR domain. Post-translationally, autoubiquitinated and undergoes proteasome-mediated degradation. In terms of processing, the truncated protein (tLivin) not only loses its anti-apoptotic effect but also acquires a pro-apoptotic effect.

It is found in the nucleus. The protein resides in the cytoplasm. The protein localises to the golgi apparatus. The catalysed reaction is S-ubiquitinyl-[E2 ubiquitin-conjugating enzyme]-L-cysteine + [acceptor protein]-L-lysine = [E2 ubiquitin-conjugating enzyme]-L-cysteine + N(6)-ubiquitinyl-[acceptor protein]-L-lysine.. Apoptotic regulator capable of exerting proapoptotic and anti-apoptotic activities and plays crucial roles in apoptosis, cell proliferation, and cell cycle control. Its anti-apoptotic activity is mediated through the inhibition of CASP3, CASP7 and CASP9, as well as by its E3 ubiquitin-protein ligase activity. As it is a weak caspase inhibitor, its anti-apoptotic activity is thought to be due to its ability to ubiquitinate DIABLO/SMAC targeting it for degradation thereby promoting cell survival. May contribute to caspase inhibition, by blocking the ability of DIABLO/SMAC to disrupt XIAP/BIRC4-caspase interactions. Protects against apoptosis induced by TNF or by chemical agents such as adriamycin, etoposide or staurosporine. Suppression of apoptosis is mediated by activation of MAPK8/JNK1, and possibly also of MAPK9/JNK2. This activation depends on TAB1 and MAP3K7/TAK1. In vitro, inhibits CASP3 and proteolytic activation of pro-CASP9. The chain is Baculoviral IAP repeat-containing protein 7 (Birc7) from Mus musculus (Mouse).